The following is a 263-amino-acid chain: Small ribosomal subunit protein uS3 (263 aa).

Residues 39–107 (VREYLKKKLK…PVHVNIEEIR (69 aa)) form the KH type-2 domain. Residues 211–263 (GELPPEAATPREEERRPRRAPRGDRPDGGRPGRPGGRGRGPRKADAAPAPEGE) form a disordered region. Basic and acidic residues predominate over residues 219–240 (TPREEERRPRRAPRGDRPDGGR).

It belongs to the universal ribosomal protein uS3 family. As to quaternary structure, part of the 30S ribosomal subunit. Forms a tight complex with proteins S10 and S14.

Functionally, binds the lower part of the 30S subunit head. Binds mRNA in the 70S ribosome, positioning it for translation. The protein is Small ribosomal subunit protein uS3 of Bordetella petrii (strain ATCC BAA-461 / DSM 12804 / CCUG 43448).